The chain runs to 167 residues: Ubiquitin-conjugating enzyme E2 2 (167 aa).

One can recognise a UBC core domain in the interval 4–150; the sequence is PARRRLMRDF…VKETVEKSWE (147 aa). Catalysis depends on C88, which acts as the Glycyl thioester intermediate. Residues 148 to 167 are disordered; sequence SWEDNMDDMDDSDEDDEDDE. The segment covering 151–167 has biased composition (acidic residues); that stretch reads DNMDDMDDSDEDDEDDE.

This sequence belongs to the ubiquitin-conjugating enzyme family.

It localises to the cytoplasm. The protein localises to the nucleus. The enzyme catalyses S-ubiquitinyl-[E1 ubiquitin-activating enzyme]-L-cysteine + [E2 ubiquitin-conjugating enzyme]-L-cysteine = [E1 ubiquitin-activating enzyme]-L-cysteine + S-ubiquitinyl-[E2 ubiquitin-conjugating enzyme]-L-cysteine.. The protein operates within protein modification; protein ubiquitination. Its function is as follows. Catalyzes the covalent attachment of ubiquitin to other proteins. Plays a role in transcription regulation by catalyzing the monoubiquitination of histone H2B to form H2BK123ub1. H2BK123ub1 gives a specific tag for epigenetic transcriptional activation and is also a prerequisite for H3K4me and H3K79me formation. Also involved in postreplication repair of UV-damaged DNA, in N-end rule-dependent protein degradation and in sporulation. The polypeptide is Ubiquitin-conjugating enzyme E2 2 (UBC2) (Candida glabrata (strain ATCC 2001 / BCRC 20586 / JCM 3761 / NBRC 0622 / NRRL Y-65 / CBS 138) (Yeast)).